Reading from the N-terminus, the 258-residue chain is Indole-3-glycerol phosphate synthase (258 aa).

The protein belongs to the TrpC family.

It carries out the reaction 1-(2-carboxyphenylamino)-1-deoxy-D-ribulose 5-phosphate + H(+) = (1S,2R)-1-C-(indol-3-yl)glycerol 3-phosphate + CO2 + H2O. The protein operates within amino-acid biosynthesis; L-tryptophan biosynthesis; L-tryptophan from chorismate: step 4/5. This is Indole-3-glycerol phosphate synthase from Chlorobium limicola (strain DSM 245 / NBRC 103803 / 6330).